We begin with the raw amino-acid sequence, 278 residues long: Indole-3-glycerol phosphate synthase (278 aa).

The protein belongs to the TrpC family.

The enzyme catalyses 1-(2-carboxyphenylamino)-1-deoxy-D-ribulose 5-phosphate + H(+) = (1S,2R)-1-C-(indol-3-yl)glycerol 3-phosphate + CO2 + H2O. Its pathway is amino-acid biosynthesis; L-tryptophan biosynthesis; L-tryptophan from chorismate: step 4/5. The protein is Indole-3-glycerol phosphate synthase of Pseudomonas aeruginosa (strain UCBPP-PA14).